A 374-amino-acid polypeptide reads, in one-letter code: Aminomethyltransferase (374 aa).

This sequence belongs to the GcvT family. The glycine cleavage system is composed of four proteins: P, T, L and H.

It catalyses the reaction N(6)-[(R)-S(8)-aminomethyldihydrolipoyl]-L-lysyl-[protein] + (6S)-5,6,7,8-tetrahydrofolate = N(6)-[(R)-dihydrolipoyl]-L-lysyl-[protein] + (6R)-5,10-methylene-5,6,7,8-tetrahydrofolate + NH4(+). Its function is as follows. The glycine cleavage system catalyzes the degradation of glycine. The chain is Aminomethyltransferase from Caldanaerobacter subterraneus subsp. tengcongensis (strain DSM 15242 / JCM 11007 / NBRC 100824 / MB4) (Thermoanaerobacter tengcongensis).